The chain runs to 386 residues: O-phospho-L-seryl-tRNA:Cys-tRNA synthase (386 aa).

Pyridoxal 5'-phosphate-binding positions include 89 to 90 (AR), N196, and 219 to 221 (SGH). Position 222 is an N6-(pyridoxal phosphate)lysine (K222).

It belongs to the SepCysS family. As to quaternary structure, homodimer. Interacts with SepRS. Requires pyridoxal 5'-phosphate as cofactor.

The catalysed reaction is O-phospho-L-seryl-tRNA(Cys) + hydrogen sulfide + H(+) = L-cysteinyl-tRNA(Cys) + phosphate. In terms of biological role, converts O-phospho-L-seryl-tRNA(Cys) (Sep-tRNA(Cys)) to L-cysteinyl-tRNA(Cys) (Cys-tRNA(Cys)). In Methanosarcina acetivorans (strain ATCC 35395 / DSM 2834 / JCM 12185 / C2A), this protein is O-phospho-L-seryl-tRNA:Cys-tRNA synthase.